We begin with the raw amino-acid sequence, 445 residues long: Probable carboxypeptidase UREG_07869 (445 aa).

Positions 1–17 (MKSLILTTLALLPLVSC) are cleaved as a signal peptide. Asp165 serves as a coordination point for Zn(2+). Glu197 functions as the Proton acceptor in the catalytic mechanism. Position 198 (Glu198) interacts with Zn(2+).

The protein belongs to the peptidase M20A family. Zn(2+) is required as a cofactor.

The protein resides in the secreted. In Uncinocarpus reesii (strain UAMH 1704), this protein is Probable carboxypeptidase UREG_07869.